The primary structure comprises 453 residues: Gastrin/cholecystokinin type B receptor (453 aa).

Residues 1 to 57 (MDLLKLNRSLQGPGPGSGSSLCRPGVSLLNSSSAGNLSCETPRIRGTGTRELELTIR) lie on the Extracellular side of the membrane. 3 N-linked (GlcNAc...) asparagine glycosylation sites follow: Asn-7, Asn-30, and Asn-36. The helical transmembrane segment at 58–79 (ITLYAVIFLMSVGGNVLIIVVL) threads the bilayer. Residues 80–87 (GLSRRLRT) lie on the Cytoplasmic side of the membrane. The chain crosses the membrane as a helical span at residues 88–109 (VTNAFLLSLAVSDLLLAVACMP). Residues 110-131 (FTLLPNLMGTFIFGTVICKAVS) lie on the Extracellular side of the membrane. Residues Cys-127 and Cys-205 are joined by a disulfide bond. A helical transmembrane segment spans residues 132 to 150 (YLMGVSVSVSTLNLAAIAL). Residues 151-170 (ERYSAICRPLQARVWQTRSH) are Cytoplasmic-facing. A helical transmembrane segment spans residues 171–189 (AARVILATWLLSGLLMVPY). The Extracellular portion of the chain corresponds to 190–219 (PVYTVVQPVGPRILQCMHLWPSERVQQMWS). Residues 220–242 (VLLLILLFFIPGVVMAVAYGLIS) form a helical membrane-spanning segment. Over 243–339 (RELYLGLRFD…KLLAKKRVVR (97 aa)) the chain is Cytoplasmic. The interval 257–276 (SETQSRVRNQGGLPGGAAAP) is disordered. A helical membrane pass occupies residues 340–361 (MLLVIVLLFFVCWLPVYSANTW). Topologically, residues 362–379 (RAFDGPGARRALAGAPIS) are extracellular. A helical transmembrane segment spans residues 380-400 (FIHLLSYTSACANPLVYCFMH). The Cytoplasmic segment spans residues 401 to 453 (RRFRQACLDTCARCCPRPPRARPRPLPDEDPPTPSIASLSRLSYTTISTLGPG). Residue Cys-414 is the site of S-palmitoyl cysteine attachment.

Belongs to the G-protein coupled receptor 1 family.

The protein localises to the cell membrane. Receptor for gastrin and cholecystokinin. The CCK-B receptors occur throughout the central nervous system where they modulate anxiety, analgesia, arousal, and neuroleptic activity. This receptor mediates its action by association with G proteins that activate a phosphatidylinositol-calcium second messenger system. This is Gastrin/cholecystokinin type B receptor (Cckbr) from Mus musculus (Mouse).